A 291-amino-acid polypeptide reads, in one-letter code: Secretory carrier-associated membrane protein 5 (291 aa).

Residues 1–10 (MGGRYDRNTF) are compositionally biased toward basic and acidic residues. The disordered stretch occupies residues 1–66 (MGGRYDRNTF…GSGAQDLKKK (66 aa)). The Cytoplasmic portion of the chain corresponds to 1–126 (MGGRYDRNTF…EILVRLQRLQ (126 aa)). Position 34 is a phosphoserine (serine 34). Residues 58-94 (SGAQDLKKKEKELQAKEADLRRREQDLKRKQDAAARA) adopt a coiled-coil conformation. The next 4 helical transmembrane spans lie at 127–147 (YIAFATYLGLVLALFWNIIAV), 159–179 (IWLLAVIYFISGVPGGYVLWY), 194–214 (FGWFFLFYMLHILFCLFAAVA), and 242–262 (IFYFIGFGLFCLESVVSIWVI). Residues 263 to 288 (QQVYMYFRGSGKADDMRRDAARGAMR) lie on the Cytoplasmic side of the membrane.

It belongs to the SCAMP family.

It is found in the cell membrane. The protein localises to the cytoplasmic vesicle. The protein resides in the secretory vesicle membrane. Its function is as follows. Probably involved in membrane trafficking. This chain is Secretory carrier-associated membrane protein 5 (SCAMP5), found in Arabidopsis thaliana (Mouse-ear cress).